We begin with the raw amino-acid sequence, 741 residues long: MKSVKIIIILALALLIQISHIADAKTYTVNFSSIGGLEVTPDSPHPKAWHRDTRDLPSNPYYTSDRTPFTQADIDLIESPDSSGFSSGGQDTHHFYFSIPQNANVVVRWRGHAQEDGDYVTLYYWDGSSWQKLEETTSGSWTWISGSFTASCEAHILAVGHDGSLEYTHPTSDYVEIEVSVANPLPVSVVKAEGNPRNYDGFFDTDTITLYAKVVSNGNPVPDYPVKFYAEFDSQRIFLGGAWTNSSGIAKLSFIPKNVGLSDKLRVNFVAKIEDVMTNCNAYTTTTNRAILAENVAITPGSYDITLVGRMYYSGGADWVRVNWYVDENSVLKPYPIPVVQKFTGNRASVTIWKYGLDDYCTDPNCHREGIYGNFDDADWDGACIAVGSTTPMCGRDVGGACYGDPDGPLKGRHDCTYFSGYRVGPFVQMNIPDHALGFLAAMVIQLFGGGELDDFMRATHYDQHEGPYGVLVSNAGCGALNPSTEQALTHGALGLFADPKGGLGVVGFVGLIADNEHAIGIMMGHRYGIHPFTAIVTTVPNYPSDEAGWRNYMDTWLYYLLNNAVYIAKTTGEELAAWSLRYPTQSDVVNLNRAFNDFITDFLPYMHEVLWLVVNCGKTVNHPFIISTFVQFKDNFEIVHRIMLNSTLNNALGNLISEVLLQLPNVVGPPDASTGINYLLNHRQYLSYSEREIFGYRMLQLLDQLTEVVVTLLKEIPLMEQSSRDNPGWDFNWIAGCGEG.

Residues 1–22 (MKSVKIIIILALALLIQISHIA) form the signal peptide.

This is an uncharacterized protein from Archaeoglobus fulgidus (strain ATCC 49558 / DSM 4304 / JCM 9628 / NBRC 100126 / VC-16).